A 163-amino-acid chain; its full sequence is Small heat shock protein C4 (163 aa).

Positions 53-163 constitute a sHSP domain; that stretch reads YNNKILSPRT…QSKAKKIKIS (111 aa).

Belongs to the small heat shock protein (HSP20) family.

This is Small heat shock protein C4 (hspc4-1) from Rickettsia felis (strain ATCC VR-1525 / URRWXCal2) (Rickettsia azadi).